We begin with the raw amino-acid sequence, 197 residues long: NAD(P)H-quinone oxidoreductase subunit 6, chloroplastic (197 aa).

5 helical membrane-spanning segments follow: residues 10-30 (FVLA…VLLV), 39-59 (LGLV…DFVA), 60-80 (AAQL…AVMI), 94-114 (IGYI…SFVI), and 147-167 (LLGE…AALV).

It belongs to the complex I subunit 6 family. NDH is composed of at least 16 different subunits, 5 of which are encoded in the nucleus.

It is found in the plastid. The protein localises to the chloroplast thylakoid membrane. It catalyses the reaction a plastoquinone + NADH + (n+1) H(+)(in) = a plastoquinol + NAD(+) + n H(+)(out). The catalysed reaction is a plastoquinone + NADPH + (n+1) H(+)(in) = a plastoquinol + NADP(+) + n H(+)(out). Its function is as follows. NDH shuttles electrons from NAD(P)H:plastoquinone, via FMN and iron-sulfur (Fe-S) centers, to quinones in the photosynthetic chain and possibly in a chloroplast respiratory chain. The immediate electron acceptor for the enzyme in this species is believed to be plastoquinone. Couples the redox reaction to proton translocation, and thus conserves the redox energy in a proton gradient. The sequence is that of NAD(P)H-quinone oxidoreductase subunit 6, chloroplastic (ndhG) from Adiantum capillus-veneris (Maidenhair fern).